We begin with the raw amino-acid sequence, 380 residues long: Cell division protein ZipA (380 aa).

Topologically, residues 1-7 (MEDNFRN) are periplasmic. Residues 8–28 (VLIILSAIVITAIFIHGLWTL) traverse the membrane as a helical segment. Residues 29-380 (RKQKNPYKLK…DRKSRIALVE (352 aa)) are Cytoplasmic-facing.

This sequence belongs to the ZipA family. Interacts with FtsZ via their C-terminal domains.

It localises to the cell inner membrane. Functionally, essential cell division protein that stabilizes the FtsZ protofilaments by cross-linking them and that serves as a cytoplasmic membrane anchor for the Z ring. Also required for the recruitment to the septal ring of downstream cell division proteins. This is Cell division protein ZipA from Colwellia psychrerythraea (strain 34H / ATCC BAA-681) (Vibrio psychroerythus).